A 379-amino-acid chain; its full sequence is Putative zinc metalloprotease BR1156/BS1330_I1152 (379 aa).

A Zn(2+)-binding site is contributed by His33. Residue Glu34 is part of the active site. Position 37 (His37) interacts with Zn(2+). Helical transmembrane passes span 39 to 61 (LVAR…ELLG), 122 to 144 (VFAG…FALY), 305 to 327 (FDWL…LFPL), and 355 to 377 (IFYR…NDLF). In terms of domain architecture, PDZ spans 133–208 (TIAIFSVFFA…LNFTVERDGK (76 aa)).

The protein belongs to the peptidase M50B family. Zn(2+) is required as a cofactor.

It is found in the cell inner membrane. This Brucella suis biovar 1 (strain 1330) protein is Putative zinc metalloprotease BR1156/BS1330_I1152.